Consider the following 1079-residue polypeptide: Electrogenic sodium bicarbonate cotransporter 1 (1079 aa).

Residues 1 to 62 form a required for interaction with AHCYL1 region; it reads MEDEAVLDRG…EKREKERISE (62 aa). The Cytoplasmic portion of the chain corresponds to 1-466; that stretch reads MEDEAVLDRG…FASDFYDALN (466 aa). Tyr30 carries the phosphotyrosine modification. The span at 39–52 shows a compositional bias: basic residues; sequence YRRRRRHKRKTGHK. The disordered stretch occupies residues 39–78; that stretch reads YRRRRRHKRKTGHKEKREKERISENYSDKSDVENADESSS. Thr49 is modified (phosphothreonine; by PKA). The span at 53–70 shows a compositional bias: basic and acidic residues; it reads EKREKERISENYSDKSDV. Ser61, Ser65, Ser68, Ser223, Ser232, Ser233, and Ser245 each carry phosphoserine. Residues 237 to 265 are disordered; it reads MFTSPDNGSPAMTHRNLTSSSLNDISDKP. 2 positions are modified to phosphothreonine: Thr249 and Thr254. The segment covering 251 to 260 has biased composition (polar residues); it reads RNLTSSSLND. 3 positions are modified to phosphoserine: Ser256, Ser257, and Ser262. Residues 467–491 traverse the membrane as a helical segment; that stretch reads IQSLSAILFIYLATVTNAITFGGLL. Over 492–501 the chain is Extracellular; sequence GDATDNMQGV. The chain crosses the membrane as a helical span at residues 502–520; it reads LESFLGTAVSGAIFCLFAG. Position 521 (Gln521) is a topological domain, cytoplasmic. Residues 522 to 542 traverse the membrane as a discontinuously helical segment; sequence PLTILSSTGPVLVFERLLFNF. The Extracellular segment spans residues 543-550; that stretch reads SKDHNFDY. A helical transmembrane segment spans residues 551 to 571; the sequence is LEFRLWIGLWSAFLCLILVAT. The Cytoplasmic segment spans residues 572–585; it reads DASFLVQYFTRFTE. A helical transmembrane segment spans residues 586–609; the sequence is EGFSSLISFIFIYDAFKKMIKLAD. Over 610–692 the chain is Extracellular; sequence YYPINSDFKV…GNNCNFVPDV (83 aa). The helical transmembrane segment at 693–710 threads the bilayer; that stretch reads TLMSFILFLGTYTSSMAL. The Cytoplasmic portion of the chain corresponds to 711–725; sequence KKFKTSRYFPTTARK. A helical membrane pass occupies residues 726–745; sequence LISDFAIILSILIFCVIDAL. Residues 746 to 779 are Extracellular-facing; it reads VGVDTPKLIVPSEFKPTSPNRGWFVPPFGGNPWW. An interaction with CA4 region spans residues 748 to 779; the sequence is VDTPKLIVPSEFKPTSPNRGWFVPPFGGNPWW. A helical membrane pass occupies residues 780-807; it reads VYLAAAIPALLVTILIFMDQQITAVIVN. Residues 808 to 819 are Cytoplasmic-facing; that stretch reads RKEHKLKKGAGY. The chain crosses the membrane as a helical span at residues 820-836; that stretch reads HLDLFWVAILMVVCSFM. Position 837 (Ala837) is a topological domain, extracellular. The discontinuously helical transmembrane segment at 838–855 threads the bilayer; sequence LPWYVAATVISIAHIDSL. The Cytoplasmic segment spans residues 856 to 877; sequence KMETETSAPGEQPKFLGVREQR. Residues 878-894 form a helical membrane-spanning segment; the sequence is VTGTLVFILTGLSVFMA. Residues 895–901 lie on the Extracellular side of the membrane; it reads PILKFIP. The helical transmembrane segment at 902 to 918 threads the bilayer; sequence MPVLYGVFLYMGVASLN. Residues 919–960 lie on the Cytoplasmic side of the membrane; the sequence is GVQFMDRLKLLLMPLKHQPDFIYLRHVPLRRVHLFTFLQVLC. Positions 961 to 986 form an intramembrane region, discontinuously helical; the sequence is LALLWILKSTVAAIIFPVMILALVAV. Over 987–1079 the chain is Cytoplasmic; that stretch reads RKGMDYLFSQ…STFLERHTSC (93 aa). The tract at residues 1002 to 1004 is CA2-binding; it reads LDD. The segment at 1012-1079 is disordered; that stretch reads KKKEDEKKKK…STFLERHTSC (68 aa). Phosphoserine; by PKA is present on Ser1026. The residue at position 1029 (Ser1029) is a Phosphoserine. Residues 1030-1033 are CA2-binding; that stretch reads DNDD. Phosphoserine occurs at positions 1034 and 1044. The segment at 1057–1059 is required for basolateral targeting; sequence FLS. Over residues 1062-1079 the composition is skewed to basic and acidic residues; sequence KPSDREKSSTFLERHTSC. The residue at position 1069 (Ser1069) is a Phosphoserine.

The protein belongs to the anion exchanger (TC 2.A.31) family. As to quaternary structure, homodimer. Interacts with CA2/carbonic anhydrase 2 and CA4/carbonic anhydrase 4 which may regulate transporter activity. Isoform 1 but not isoform 2 interacts with AHCYL1 (via PEST domain when phosphorylated); the interaction increases SLC4A4 isoform 1 activity. Interacts with AHCYL2. Phosphorylation of Ser-1026 by PKA increases the binding of CA2 and changes the Na(+):HCO3(-) stoichiometry of the transporter from 3:1 to 2:1. Phosphorylated in presence of STK39 and dephosphorylated in presence of PP1 phosphatase; phosphorylation seems to inhibit SLC4A4 activity. Post-translationally, N-glycosylated. May not be necessary for the transporter basic functions. As to expression, expressed in colonic mucosa, kidney cortex and to gastric mucosa.

It localises to the basolateral cell membrane. The protein localises to the cell membrane. The catalysed reaction is 2 hydrogencarbonate(out) + Na(+)(out) = 2 hydrogencarbonate(in) + Na(+)(in). It catalyses the reaction 3 hydrogencarbonate(out) + Na(+)(out) = 3 hydrogencarbonate(in) + Na(+)(in). Functionally, electrogenic sodium/bicarbonate cotransporter with a Na(+):HCO3(-) stoichiometry varying from 1:2 to 1:3. May regulate bicarbonate influx/efflux at the basolateral membrane of cells and regulate intracellular pH. The protein is Electrogenic sodium bicarbonate cotransporter 1 (SLC4A4) of Oryctolagus cuniculus (Rabbit).